Here is an 887-residue protein sequence, read N- to C-terminus: DNA gyrase subunit A (887 aa).

Residues 35–501 (LPDVRDGLKP…GFENLEDEDL (467 aa)) enclose the Topo IIA-type catalytic domain. Tyr-123 functions as the O-(5'-phospho-DNA)-tyrosine intermediate in the catalytic mechanism. A GyrA-box motif is present at residues 528–534 (QNRGGRG). Residues 811–864 (KEDAEDETNEDEQSTSTVSEDGTEQQREAVVNDETPGNAIHTEVIDSEENDEDG) are disordered. The span at 813–823 (DAEDETNEDEQ) shows a compositional bias: acidic residues.

It belongs to the type II topoisomerase GyrA/ParC subunit family. In terms of assembly, heterotetramer, composed of two GyrA and two GyrB chains. In the heterotetramer, GyrA contains the active site tyrosine that forms a transient covalent intermediate with DNA, while GyrB binds cofactors and catalyzes ATP hydrolysis.

The protein resides in the cytoplasm. It catalyses the reaction ATP-dependent breakage, passage and rejoining of double-stranded DNA.. Its function is as follows. A type II topoisomerase that negatively supercoils closed circular double-stranded (ds) DNA in an ATP-dependent manner to modulate DNA topology and maintain chromosomes in an underwound state. Negative supercoiling favors strand separation, and DNA replication, transcription, recombination and repair, all of which involve strand separation. Also able to catalyze the interconversion of other topological isomers of dsDNA rings, including catenanes and knotted rings. Type II topoisomerases break and join 2 DNA strands simultaneously in an ATP-dependent manner. The protein is DNA gyrase subunit A of Staphylococcus aureus (strain COL).